The following is a 575-amino-acid chain: MSKLRNLNRQFISNLKTHETVTNAKRNLILSILKSTTTKREARNYLNKYQNQFDFSDITFNNGVPSNSLEKRDSQRELFINRFLNKQNPFTNIYDDETKLQKIPLRLALFKIKFQSISLENWKGMAETFKRLIHLGISPIIMLDYDHLPANTFRNNELYMLNQTNKIMNILGKPTEENDLKTIIMRSLFTKKTINDKDLAIDNLESVLIPLYQGVIPIIQPIVYNASTCMQEFIDSNDLLFSLCSSLLTTKNVLSIEKVVMIDPIGGIPSIERNQTSHVFINLSQEYSDIVSELYIGFIKPEYRIFHMNNLKAMNKTLTLVSDKTGNDETTGIITTPDIMSVNNDQLNPIIYNVLTDRSIISSSLPTSHNRTPELSTSILKKGVDVNILDALNYPKAFTLNNLVQDGSVNKSKLVDLIDDSFGKKLDTEKYFDRINDSLATVVIVGDYDGAAIITWETCSKTNEKIAYLDKFAIASVNQGLPGLADIIFKIILQSHPNELIWRSRKNNPVNKWYFERCCGTLSNPGSQWKIFYTGDIFNKKIDKLKKQGIPGGVNIHGKMHQYSDITENIPPSFL.

A mitochondrion-targeting transit peptide spans methionine 1–serine 35. The 160-residue stretch at phenylalanine 398–histidine 557 folds into the N-acetyltransferase domain.

The protein belongs to the acetyltransferase family.

The protein localises to the mitochondrion. The enzyme catalyses L-glutamate + acetyl-CoA = N-acetyl-L-glutamate + CoA + H(+). It participates in amino-acid biosynthesis; L-arginine biosynthesis; N(2)-acetyl-L-ornithine from L-glutamate: step 1/4. In terms of biological role, N-acetylglutamate synthase involved in arginine biosynthesis. In Debaryomyces hansenii (strain ATCC 36239 / CBS 767 / BCRC 21394 / JCM 1990 / NBRC 0083 / IGC 2968) (Yeast), this protein is Amino-acid acetyltransferase, mitochondrial (ARG2).